Here is a 300-residue protein sequence, read N- to C-terminus: uncharacterized protein (300 aa).

The stretch at 67-179 (LAFEELEKEK…IAKANELKDS (113 aa)) forms a coiled coil. The span at 203–285 (STTASLSQSE…PSSQSTYQQQ (83 aa)) shows a compositional bias: low complexity. Residues 203–300 (STTASLSQSE…KGFFARLFNL (98 aa)) are disordered.

This is an uncharacterized protein from Staphylococcus epidermidis (strain ATCC 12228 / FDA PCI 1200).